Consider the following 282-residue polypeptide: Armadillo repeat-containing protein 1 (282 aa).

Methionine 1 bears the N-acetylmethionine mark. Residues 39–81 (GCLPGLILFMDHPNPPVVHSALLALRYLAECRANREKMKGELG) form an ARM repeat. Threonine 137 carries the post-translational modification Phosphothreonine. Phosphoserine occurs at positions 189, 246, 260, and 267. The disordered stretch occupies residues 239-261 (DYLPEDESPTKEQDKAVSRVGSH). The span at 246 to 255 (SPTKEQDKAV) shows a compositional bias: basic and acidic residues.

In terms of assembly, interacts with mitochondrial contact site and cristae organizing system (MICOS) complex components IMMT/MIC60 and MICOS10/MIC10. Interacts with mitochondrial outer membrane sorting assembly machinery (SAM) complex components SAMM50 and MTX1.

The protein resides in the cytoplasm. The protein localises to the mitochondrion. Its subcellular location is the mitochondrion outer membrane. Its function is as follows. In association with mitochondrial contact site and cristae organizing system (MICOS) complex components and mitochondrial outer membrane sorting assembly machinery (SAM) complex components may regulate mitochondrial dynamics playing a role in determining mitochondrial length, distribution and motility. The chain is Armadillo repeat-containing protein 1 (Armc1) from Mus musculus (Mouse).